The following is a 472-amino-acid chain: L-fuculokinase (472 aa).

This sequence belongs to the FGGY kinase family. A divalent metal cation is required as a cofactor.

It carries out the reaction L-fuculose + ATP = L-fuculose 1-phosphate + ADP + H(+). It participates in carbohydrate degradation; L-fucose degradation; L-lactaldehyde and glycerone phosphate from L-fucose: step 2/3. Catalyzes the phosphorylation of L-fuculose. In Salmonella typhi, this protein is L-fuculokinase.